The following is a 62-amino-acid chain: Defensin-like protein A (62 aa).

The N-terminal stretch at 1–26 (MRCVVLFMVSCLLIVLLINHFEEVEA) is a signal peptide. A disulfide bridge links cysteine 42 with cysteine 52.

Belongs to the DEFL family.

Its subcellular location is the secreted. Functionally, truncated and inactivated form of SCRA, a protein involved in male-mediated self-incompatibility when active. Most A.thaliana cultivars contain such an inactive form and thus, are self-fertiles. The chain is Defensin-like protein A (SCRA) from Arabidopsis thaliana (Mouse-ear cress).